A 342-amino-acid polypeptide reads, in one-letter code: Ferredoxin--NADP reductase (342 aa).

FAD is bound by residues Cys-17, Asp-36, Gln-44, Tyr-49, Ile-89, Phe-124, Asp-289, and Thr-330.

This sequence belongs to the ferredoxin--NADP reductase type 2 family. Homodimer. FAD is required as a cofactor.

The catalysed reaction is 2 reduced [2Fe-2S]-[ferredoxin] + NADP(+) + H(+) = 2 oxidized [2Fe-2S]-[ferredoxin] + NADPH. This is Ferredoxin--NADP reductase from Rhodopseudomonas palustris (strain BisB5).